The chain runs to 349 residues: tRNA pseudouridine synthase D (349 aa).

Residue F27 participates in substrate binding. D80 acts as the Nucleophile in catalysis. A substrate-binding site is contributed by N129. The TRUD domain maps to 155 to 303 (GVPNYFGAQR…VEAARRAMLL (149 aa)). F329 contributes to the substrate binding site.

Belongs to the pseudouridine synthase TruD family.

The enzyme catalyses uridine(13) in tRNA = pseudouridine(13) in tRNA. Its function is as follows. Responsible for synthesis of pseudouridine from uracil-13 in transfer RNAs. In Escherichia coli (strain K12 / MC4100 / BW2952), this protein is tRNA pseudouridine synthase D.